A 367-amino-acid chain; its full sequence is Uracil nucleotide/cysteinyl leukotriene receptor (367 aa).

A disordered region spans residues 1–28; the sequence is MSKRSWWAGSRKPPREMLKLSGSDSSQS. At 1-64 the chain is on the extracellular side; it reads MSKRSWWAGS…TPLENMLFAS (64 aa). Asn-42 carries N-linked (GlcNAc...) asparagine glycosylation. A helical membrane pass occupies residues 65 to 85; sequence FYLLDFILALVGNTLALWLFI. Over 86–92 the chain is Cytoplasmic; the sequence is RDHKSGT. Residues 93-113 traverse the membrane as a helical segment; sequence PANVFLMHLAVADLSCVLVLP. Over 114 to 133 the chain is Extracellular; it reads TRLVYHFSGNHWPFGEIACR. An intrachain disulfide couples Cys-132 to Cys-209. A helical transmembrane segment spans residues 134 to 154; sequence LTGFLFYLNMYASIYFLTCIS. Over 155–175 the chain is Cytoplasmic; sequence ADRFLAIVHPVKSLKLRRPLY. Residues 176–196 form a helical membrane-spanning segment; that stretch reads AHLACAFLWVVVAVAMAPLLV. The Extracellular segment spans residues 197 to 223; sequence SPQTVQTNHTVVCLQLYREKASHHALV. The N-linked (GlcNAc...) asparagine glycan is linked to Asn-204. A helical transmembrane segment spans residues 224–244; that stretch reads SLAVAFTFPFITTVTCYLLII. Residues 245–260 lie on the Cytoplasmic side of the membrane; sequence RSLRQGLRVEKRLKTK. Residues 261 to 281 traverse the membrane as a helical segment; the sequence is AVRMIAIVLAIFLVCFVPYHV. An N-linked (GlcNAc...) asparagine glycan is attached at Asn-282. The Extracellular segment spans residues 282–308; that stretch reads NRSVYVLHYRSHGASCATQRILALANR. Residues 309–329 traverse the membrane as a helical segment; sequence ITSCLTSLNGALDPIMYFFVA. Over 330 to 367 the chain is Cytoplasmic; that stretch reads EKFRHALCNLLCGKRLKGPPPSFEGKTNESSLSAKSEL.

Belongs to the G-protein coupled receptor 1 family. In terms of tissue distribution, expressed in brain, kidney, heart and umbilical vein endothelial cells. Highest level in brain.

The protein localises to the cell membrane. Dual specificity receptor for uracil nucleotides and cysteinyl leukotrienes (CysLTs). Signals through G(i) and inhibition of adenylyl cyclase. May mediate brain damage by nucleotides and CysLTs following ischemia. This is Uracil nucleotide/cysteinyl leukotriene receptor (GPR17) from Homo sapiens (Human).